The following is a 76-amino-acid chain: Omega-conotoxin-like TxO5 (76 aa).

The first 22 residues, 1–22 (MKLTCMMIVAVLFLTAWTFVTA), serve as a signal peptide directing secretion. A propeptide spanning residues 23–48 (ITSNGLENLFPKAHHEMKNPEASKLN) is cleaved from the precursor. 3 cysteine pairs are disulfide-bonded: cysteine 51-cysteine 66, cysteine 58-cysteine 70, and cysteine 65-cysteine 75.

Belongs to the conotoxin O1 superfamily. As to expression, expressed by the venom duct.

The protein localises to the secreted. Its function is as follows. Omega-conotoxins act at presynaptic membranes, they bind and block voltage-gated calcium channels (Cav). This Conus textile (Cloth-of-gold cone) protein is Omega-conotoxin-like TxO5.